Reading from the N-terminus, the 302-residue chain is Oxygen-dependent coproporphyrinogen-III oxidase (302 aa).

Residue serine 94 participates in substrate binding. Histidine 98 and histidine 108 together coordinate a divalent metal cation. Histidine 108 serves as the catalytic Proton donor. 110-112 serves as a coordination point for substrate; it reads NVR. A divalent metal cation is bound by residues histidine 147 and histidine 177. The tract at residues 242–277 is important for dimerization; that stretch reads YVEFNLVYDRGTLFGLQTGGRTESILMSMPPLVRWQ. 260–262 serves as a coordination point for substrate; sequence GGR.

This sequence belongs to the aerobic coproporphyrinogen-III oxidase family. Homodimer. A divalent metal cation serves as cofactor.

The protein resides in the cytoplasm. It carries out the reaction coproporphyrinogen III + O2 + 2 H(+) = protoporphyrinogen IX + 2 CO2 + 2 H2O. The protein operates within porphyrin-containing compound metabolism; protoporphyrin-IX biosynthesis; protoporphyrinogen-IX from coproporphyrinogen-III (O2 route): step 1/1. Its function is as follows. Involved in the heme biosynthesis. Catalyzes the aerobic oxidative decarboxylation of propionate groups of rings A and B of coproporphyrinogen-III to yield the vinyl groups in protoporphyrinogen-IX. This is Oxygen-dependent coproporphyrinogen-III oxidase from Shewanella putrefaciens (strain CN-32 / ATCC BAA-453).